A 425-amino-acid chain; its full sequence is Adenosylhomocysteinase (425 aa).

Residues T60, D132, and E157 each coordinate substrate. 158–160 (TTT) contributes to the NAD(+) binding site. Substrate contacts are provided by K187 and D191. Residues N192, 221-226 (GYGWCG), E244, N279, 300-302 (SGH), and N347 each bind NAD(+).

Belongs to the adenosylhomocysteinase family. It depends on NAD(+) as a cofactor.

It localises to the cytoplasm. It carries out the reaction S-adenosyl-L-homocysteine + H2O = L-homocysteine + adenosine. It participates in amino-acid biosynthesis; L-homocysteine biosynthesis; L-homocysteine from S-adenosyl-L-homocysteine: step 1/1. In terms of biological role, may play a key role in the regulation of the intracellular concentration of adenosylhomocysteine. In Nostoc sp. (strain PCC 7120 / SAG 25.82 / UTEX 2576), this protein is Adenosylhomocysteinase.